We begin with the raw amino-acid sequence, 106 residues long: GQPKAAPSVTLFPPSSEELQANKATLVCLISDFYPGAVKVAWKADGSPVNTGVETTTPSKQSNNKYAASSYLSLTPEQWKSHRSYSCQVTHEGSTVEKTVAPAECS.

The Ig-like domain occupies 7 to 101 (PSVTLFPPSS…EGSTVEKTVA (95 aa)). The cysteines at positions 28 and 87 are disulfide-linked.

Immunoglobulins are composed of two identical heavy chains and two identical light chains; disulfide-linked.

The protein localises to the secreted. The protein resides in the cell membrane. In terms of biological role, constant region of immunoglobulin light chains. Immunoglobulins, also known as antibodies, are membrane-bound or secreted glycoproteins produced by B lymphocytes. In the recognition phase of humoral immunity, the membrane-bound immunoglobulins serve as receptors which, upon binding of a specific antigen, trigger the clonal expansion and differentiation of B lymphocytes into immunoglobulins-secreting plasma cells. Secreted immunoglobulins mediate the effector phase of humoral immunity, which results in the elimination of bound antigens. The antigen binding site is formed by the variable domain of one heavy chain, together with that of its associated light chain. Thus, each immunoglobulin has two antigen binding sites with remarkable affinity for a particular antigen. The variable domains are assembled by a process called V-(D)-J rearrangement and can then be subjected to somatic hypermutations which, after exposure to antigen and selection, allow affinity maturation for a particular antigen. The sequence is that of Immunoglobulin lambda constant 6 from Homo sapiens (Human).